The primary structure comprises 98 residues: Aspartyl/glutamyl-tRNA(Asn/Gln) amidotransferase subunit C (98 aa).

The protein belongs to the GatC family. As to quaternary structure, heterotrimer of A, B and C subunits.

It carries out the reaction L-glutamyl-tRNA(Gln) + L-glutamine + ATP + H2O = L-glutaminyl-tRNA(Gln) + L-glutamate + ADP + phosphate + H(+). The catalysed reaction is L-aspartyl-tRNA(Asn) + L-glutamine + ATP + H2O = L-asparaginyl-tRNA(Asn) + L-glutamate + ADP + phosphate + 2 H(+). Its function is as follows. Allows the formation of correctly charged Asn-tRNA(Asn) or Gln-tRNA(Gln) through the transamidation of misacylated Asp-tRNA(Asn) or Glu-tRNA(Gln) in organisms which lack either or both of asparaginyl-tRNA or glutaminyl-tRNA synthetases. The reaction takes place in the presence of glutamine and ATP through an activated phospho-Asp-tRNA(Asn) or phospho-Glu-tRNA(Gln). The polypeptide is Aspartyl/glutamyl-tRNA(Asn/Gln) amidotransferase subunit C (Acidothermus cellulolyticus (strain ATCC 43068 / DSM 8971 / 11B)).